The following is a 501-amino-acid chain: MSKMGSLMLSRARCLLELRSALFFVKRESQDINNVRQSLGVYGRSFMTSSRMDKPSMSNKPREQMYGLGNMTAVQEPIPENSLKTVTLDQAQTAASTVTGLHPIYMDFQATSPLDYRVLDSMLPFFTGIYGNPHSRTHAYGWEAEKAVENARQEIASVINADPREIIFTSGATESNNAILKGVARFYKSRKKHLVSVQTEHKCVLDSLRALQEEGFEVTFLPVQTNGLINLDELRDAIRPDTVCVSVMAVNNEIGVCQPLEEIGKICRQKKVFFHSDAAQGYGKIDIDVNRMNIDLMSISAHKIYGPKGIGAAYVRRRPRVRLEPLISGGGQERGLRSGTLAPSQVVGFGTAARICKEEMKYDYAHISKLSQRLIDGLLAIPYTSLNGDPKSRYPGCVNISFNYVEGESLLMGLKNIALSSGSACTSASLEPSYVLRAIGQSDENAHSSIRFGIGRFTTEAEIDYAIENVSRQVSFLRNMSPLWDLVQEGVDLSTIEWSQH.

Pyridoxal 5'-phosphate contacts are provided by residues 172-173, asparagine 252, glutamine 280, and 300-302; these read AT and SAH. Lysine 303 carries the N6-(pyridoxal phosphate)lysine modification. Pyridoxal 5'-phosphate is bound at residue threonine 340. Cysteine 425 serves as the catalytic Cysteine persulfide intermediate. Cysteine 425 serves as a coordination point for [2Fe-2S] cluster.

Belongs to the class-V pyridoxal-phosphate-dependent aminotransferase family. NifS/IscS subfamily. Pyridoxal 5'-phosphate serves as cofactor.

It localises to the mitochondrion. It catalyses the reaction (sulfur carrier)-H + L-cysteine = (sulfur carrier)-SH + L-alanine. Its function is as follows. Catalyzes the removal of elemental sulfur from cysteine to produce alanine. It supplies the inorganic sulfur for iron-sulfur (Fe-S) clusters. Plays a role in both tRNA-processing and mitochondrial metabolism. Involved in the 2-thio-modification of both 5-carboxymethylaminomethyl-2-thiouridine in mitochondrial tRNAs and 5-methoxycarbonylmethyl-2-thiouridine (mcm5s2U) in cytoplasmic tRNAs. This Schizosaccharomyces pombe (strain 972 / ATCC 24843) (Fission yeast) protein is Probable cysteine desulfurase, mitochondrial.